The chain runs to 270 residues: Undecaprenyl-diphosphatase (270 aa).

Helical transmembrane passes span 1–21, 92–112, 119–139, 150–170, 193–213, 223–243, and 250–270; these read MTWW…FIPV, FRLG…YVLF, AFGS…LLLL, LSGV…VPGI, FSFL…GLEL, LSLG…IYVV, and GNLQ…LWLL.

This sequence belongs to the UppP family.

It localises to the cell inner membrane. The catalysed reaction is di-trans,octa-cis-undecaprenyl diphosphate + H2O = di-trans,octa-cis-undecaprenyl phosphate + phosphate + H(+). Its function is as follows. Catalyzes the dephosphorylation of undecaprenyl diphosphate (UPP). Confers resistance to bacitracin. The polypeptide is Undecaprenyl-diphosphatase (Salinibacter ruber (strain DSM 13855 / M31)).